We begin with the raw amino-acid sequence, 86 residues long: HssA/B-like protein 60 (86 aa).

Residues 11-33 (GNIKSSSKSNIASSSSSSSSQSL) are disordered.

The protein belongs to the hssA/B family.

The chain is HssA/B-like protein 60 (hssl60) from Dictyostelium discoideum (Social amoeba).